We begin with the raw amino-acid sequence, 357 residues long: Peptide chain release factor 1 (357 aa).

Gln236 is subject to N5-methylglutamine.

The protein belongs to the prokaryotic/mitochondrial release factor family. Post-translationally, methylated by PrmC. Methylation increases the termination efficiency of RF1.

It is found in the cytoplasm. Functionally, peptide chain release factor 1 directs the termination of translation in response to the peptide chain termination codons UAG and UAA. The chain is Peptide chain release factor 1 from Mycolicibacterium paratuberculosis (strain ATCC BAA-968 / K-10) (Mycobacterium paratuberculosis).